Reading from the N-terminus, the 247-residue chain is Cell division protein ZapD (247 aa).

It belongs to the ZapD family. Interacts with FtsZ.

It localises to the cytoplasm. Functionally, cell division factor that enhances FtsZ-ring assembly. Directly interacts with FtsZ and promotes bundling of FtsZ protofilaments, with a reduction in FtsZ GTPase activity. The polypeptide is Cell division protein ZapD (Escherichia coli O157:H7).